Reading from the N-terminus, the 426-residue chain is Glutamyl-tRNA reductase (426 aa).

Substrate contacts are provided by residues Thr49–Arg52, Ser109, Glu114–Gln116, and Gln120. Cys50 functions as the Nucleophile in the catalytic mechanism. Position 189 to 194 (Gly189 to Ser194) interacts with NADP(+).

The protein belongs to the glutamyl-tRNA reductase family. Homodimer.

The enzyme catalyses (S)-4-amino-5-oxopentanoate + tRNA(Glu) + NADP(+) = L-glutamyl-tRNA(Glu) + NADPH + H(+). It participates in porphyrin-containing compound metabolism; protoporphyrin-IX biosynthesis; 5-aminolevulinate from L-glutamyl-tRNA(Glu): step 1/2. The protein operates within porphyrin-containing compound metabolism; chlorophyll biosynthesis. Functionally, catalyzes the NADPH-dependent reduction of glutamyl-tRNA(Glu) to glutamate 1-semialdehyde (GSA). The polypeptide is Glutamyl-tRNA reductase (Thermosynechococcus vestitus (strain NIES-2133 / IAM M-273 / BP-1)).